We begin with the raw amino-acid sequence, 206 residues long: tRNA(Phe) 7-((3-amino-3-carboxypropyl)-4-demethylwyosine(37)-N(4))-methyltransferase 2 (206 aa).

The protein belongs to the TYW3 family.

The catalysed reaction is 4-demethyl-7-[(3S)-3-amino-3-carboxypropyl]wyosine(37) in tRNA(Phe) + S-adenosyl-L-methionine = 7-[(3S)-3-amino-3-carboxypropyl]wyosine(37) in tRNA(Phe) + S-adenosyl-L-homocysteine + H(+). S-adenosyl-L-methionine-dependent methyltransferase that acts as a component of the wyosine derivatives biosynthesis pathway. Probably methylates N-4 position of wybutosine-86 to produce wybutosine-72. In Pyrococcus horikoshii (strain ATCC 700860 / DSM 12428 / JCM 9974 / NBRC 100139 / OT-3), this protein is tRNA(Phe) 7-((3-amino-3-carboxypropyl)-4-demethylwyosine(37)-N(4))-methyltransferase 2.